The primary structure comprises 877 residues: G-protein coupled receptor family C group 6 member A (877 aa).

Residues 1-24 (MAGLDLSLVLMLSVLAGVREVSLT) form the signal peptide. Topologically, residues 25-567 (QVNQQGVIAP…EYFEWNSGFA (543 aa)) are extracellular. Asn53, Asn99, Asn135, Asn263, Asn310, Asn322, Asn338, and Asn358 each carry an N-linked (GlcNAc...) asparagine glycan. Asp388 serves as a coordination point for L-lysine. Residues Asn430, Asn475, Asn484, Asn528, and Asn548 are each glycosylated (N-linked (GlcNAc...) asparagine). A helical transmembrane segment spans residues 568–588 (IALLTLAALGILLLISMSALF). Over 589-603 (FWQRNSLVVKAAGGP) the chain is Cytoplasmic. A helical transmembrane segment spans residues 604–624 (LCHLILFSLLGSFISVIFFVG). The Extracellular segment spans residues 625–635 (EPSNESCRVRQ). Residue Asn628 is glycosylated (N-linked (GlcNAc...) asparagine). A helical transmembrane segment spans residues 636–656 (VIFGLSFTLCVSCILVKSLKI). Over 657 to 676 (LLAFQMNLELKELLRKLYKP) the chain is Cytoplasmic. The chain crosses the membrane as a helical span at residues 677–697 (YVIVCMCMGLQVTICTLWLTL). The Extracellular segment spans residues 698–720 (HRPFIEKVVQPKSILLECNEGSD). A helical transmembrane segment spans residues 721–741 (LMFGLMLGYIVLLALICFTFA). The Cytoplasmic portion of the chain corresponds to 742-755 (YKGRKLPQKYNEAK). Residues 756 to 776 (FITFGMLIYLMAWVIFIPVHV) form a helical membrane-spanning segment. Residues 777–782 (TTSGKY) are Extracellular-facing. Residues 783–803 (VPAVEVVVILISNYGILSCHF) form a helical membrane-spanning segment. At 804-877 (LPKCYIIIFK…VSVPEIDNVL (74 aa)) the chain is on the cytoplasmic side.

Belongs to the G-protein coupled receptor 3 family. As to quaternary structure, homodimer; disulfide-linked. In terms of tissue distribution, expressed in olfactory epithelium. Also expressed in gills, tongue, lips and palatal organ. Not expressed in brain, kidney, liver, muscle, intestine, ovary and skin. In olfactory epithelium, it is widely expressed over the apical and medial portions of the olfactory sensory neurons, regions that contain olfactory neurons. Expressed in external epithelia, which contains taste buds and solitary chemosensory cells. On gill rakers, it is widely expressed in the surface epithelium, but excluded from taste buds.

It is found in the cell membrane. In terms of biological role, olfactory receptor that is activated by amino acids that act as potent odorants in fish. Most highly activated by basic amino acids such as L-lysine and L-arginine. The protein is G-protein coupled receptor family C group 6 member A (gprc6a) of Carassius auratus (Goldfish).